The primary structure comprises 283 residues: Bifunctional protein FolD (283 aa).

Residues 165–167 (GAS) and Ser-190 contribute to the NADP(+) site.

It belongs to the tetrahydrofolate dehydrogenase/cyclohydrolase family. In terms of assembly, homodimer.

It carries out the reaction (6R)-5,10-methylene-5,6,7,8-tetrahydrofolate + NADP(+) = (6R)-5,10-methenyltetrahydrofolate + NADPH. It catalyses the reaction (6R)-5,10-methenyltetrahydrofolate + H2O = (6R)-10-formyltetrahydrofolate + H(+). The protein operates within one-carbon metabolism; tetrahydrofolate interconversion. In terms of biological role, catalyzes the oxidation of 5,10-methylenetetrahydrofolate to 5,10-methenyltetrahydrofolate and then the hydrolysis of 5,10-methenyltetrahydrofolate to 10-formyltetrahydrofolate. In Cupriavidus necator (strain ATCC 17699 / DSM 428 / KCTC 22496 / NCIMB 10442 / H16 / Stanier 337) (Ralstonia eutropha), this protein is Bifunctional protein FolD.